Here is a 748-residue protein sequence, read N- to C-terminus: Pleckstrin homology domain-containing family M member 3 (748 aa).

Disordered regions lie at residues 88 to 107 (HAKE…PLLS) and 129 to 187 (NDSL…RNKN). Composition is skewed to basic and acidic residues over residues 129-140 (NDSLDHLEDAPK) and 148-159 (SRSDVSHIDWKN). The span at 167–180 (QRSSSQGMHCTSPF) shows a compositional bias: polar residues. 2 PH domains span residues 200–297 (NILK…EAIC) and 348–443 (NIIK…SAAN). Residues 656–709 (SHVYSCSLCSQKGFICEICNNGEILYPFEENSTSRCENCGAVFHSDCKVRTVPC) form a Phorbol-ester/DAG-type zinc finger.

The protein localises to the cytoplasm. It is found in the golgi apparatus. The protein resides in the cell membrane. Functionally, may play a role during muscle differentiation. The chain is Pleckstrin homology domain-containing family M member 3 (plekhm3) from Xenopus laevis (African clawed frog).